The primary structure comprises 167 residues: Pathogenesis-related protein PRMS (167 aa).

A signal peptide spans 1-27 (MEASNKLAVLLLWLVMAAATAVHPSYS). The 119-residue stretch at 37–155 (PQNSARAAVG…NRGVFIICNY (119 aa)) folds into the SCP domain. Disulfide bonds link cysteine 71–cysteine 143, cysteine 116–cysteine 122, and cysteine 138–cysteine 153.

It belongs to the CRISP family.

In terms of biological role, probably involved in the defense reaction of plants against pathogens. The chain is Pathogenesis-related protein PRMS (PRMS) from Zea mays (Maize).